Here is a 112-residue protein sequence, read N- to C-terminus: Flowering-promoting factor 1-like protein 2 (112 aa).

Belongs to the FPF1 family. In terms of tissue distribution, expressed in leaves and in some parts of the flowers, mainly in the sepals.

Functionally, modulates the competence to flowering of apical meristems. The protein is Flowering-promoting factor 1-like protein 2 (FLP2) of Arabidopsis thaliana (Mouse-ear cress).